Reading from the N-terminus, the 637-residue chain is Chaperone protein HtpG (637 aa).

The interval 1–345 (MSHQETHGFQ…SNDLPLNVSR (345 aa)) is a; substrate-binding. The tract at residues 346–562 (EILQDNKVTR…EGEMSSQMIK (217 aa)) is b. Residues 563–637 (LMQAAGQPVP…VNQMLLKSVG (75 aa)) are c.

It belongs to the heat shock protein 90 family. Homodimer.

It localises to the cytoplasm. Functionally, molecular chaperone. Has ATPase activity. The protein is Chaperone protein HtpG of Shewanella amazonensis (strain ATCC BAA-1098 / SB2B).